The sequence spans 258 residues: MTQRIKCIIAYDGTHFSGYQIQPGKRTVQGEFEEVLRRMHKGTKVRVAASGRTDAGVHAYGQVIHFDTPLSLSSEQWKKALNAQLPDDIVVRFVQEADADFHARFSAKAKEYRYKVWTAAERDVFRRHYCAWHPYSLHISAMNEALRLLHGTHDFTSFCSAKTSIEDRVRTMYRAEVKADGPMLEFRFVGSGFLYNMVRIIVGTVLEIGQGKRSPADISTLLAAKDRRLAGPTAPAEGLYLWRVYYEDECLVHSLVDG.

The Nucleophile role is filled by Asp-54. Tyr-112 is a substrate binding site.

The protein belongs to the tRNA pseudouridine synthase TruA family. Homodimer.

The catalysed reaction is uridine(38/39/40) in tRNA = pseudouridine(38/39/40) in tRNA. Its function is as follows. Formation of pseudouridine at positions 38, 39 and 40 in the anticodon stem and loop of transfer RNAs. The polypeptide is tRNA pseudouridine synthase A (Geobacillus kaustophilus (strain HTA426)).